A 291-amino-acid polypeptide reads, in one-letter code: MADLDDIKDGKDFGIGIPQQNPAFTLKGSGSLDWGMQSRLARIFNPKTNRTVMLAFDHGYFQGPTTGLERIDINIAPLFEYADVLMCTRGILRSVVPAAANRPVVLRASGANSILTDLSNEAVAVAMEDAVRLNACAVAAQVYIGTEHEHQSIKNIIQLIDQGMRYGMPTMAVTGVGKDMVRDQRYFSLASRIAAEMGAQVIKTYYVDSGFERIAAGCPVPIVIAGGKKLPERDALEMCYQAIDQGASGVDMGRNIFQSDAPIAMLKAVHAIVHKNENAAAAYQLFLHEQN.

Lysine 203 serves as the catalytic Schiff-base intermediate with substrate.

This sequence belongs to the DeoC/FbaB aldolase family. In terms of assembly, homodecamer.

The protein localises to the cytoplasm. It catalyses the reaction dihydroxyacetone phosphate + acetyl-CoA = 3-hydroxy-2,4-dioxopentyl phosphate + CoA. Involved in the degradation of phospho-AI-2, thereby terminating induction of the lsr operon and closing the AI-2 signaling cycle. Catalyzes the transfer of an acetyl moiety from 3-hydroxy-5-phosphonooxypentane-2,4-dione to CoA to form glycerone phosphate and acetyl-CoA. The polypeptide is 3-hydroxy-5-phosphonooxypentane-2,4-dione thiolase (Yersinia pseudotuberculosis serotype O:1b (strain IP 31758)).